We begin with the raw amino-acid sequence, 630 residues long: Sodium-dependent serotonin transporter (630 aa).

At 1-87 (METTPLNSQK…ERETWGKKVD (87 aa)) the chain is on the cytoplasmic side. The segment at 31–59 (VPTPGDKVESGQISNGYSAVPSPGAGDDT) is disordered. Position 47 is a phosphotyrosine (Tyr-47). The chain crosses the membrane as a helical span at residues 88-112 (FLLSVIGYAVDLGNVWRFPYICYQN). Residues Gly-94, Ala-96, Val-97, Asp-98, and Asn-101 each contribute to the Na(+) site. Asp-98 serves as a coordination point for serotonin. Over 113-115 (GGG) the chain is Extracellular. The chain crosses the membrane as a helical span at residues 116–135 (AFLIPYTIMAIFGGIPLFYM). Over 136 to 160 (ELALGQYHRNGCISIWRKICPIFKG) the chain is Cytoplasmic. Tyr-142 carries the phosphotyrosine modification. The chain crosses the membrane as a helical span at residues 161-186 (IGYAICIIAFYIASYYNTIMAWALYY). Residues 187–252 (LISSFTDQLP…KGLQDLGGIS (66 aa)) are Extracellular-facing. Cys-200 and Cys-209 are disulfide-bonded. Asn-208 and Asn-217 each carry an N-linked (GlcNAc...) asparagine glycan. A helical membrane pass occupies residues 253 to 271 (WQLALCIMLIFTVIYFSIW). At 272 to 277 (KGVKTS) the chain is on the cytoplasmic side. Thr-276 carries the post-translational modification Phosphothreonine. The chain crosses the membrane as a helical span at residues 278-297 (GKVVWVTATFPYIILSVLLV). Residues 298–324 (RGATLPGAWRGVLFYLKPNWQKLLETG) lie on the Extracellular side of the membrane. Residues 325–347 (VWIDAAAQIFFSLGPGFGVLLAF) form a helical membrane-spanning segment. Ser-336 lines the Na(+) pocket. Over 348 to 360 (ASYNKFNNNCYQD) the chain is Cytoplasmic. Residues 361–380 (ALVTSVVNCMTSFVSGFVIF) traverse the membrane as a helical segment. Asn-368 is a binding site for Na(+). Residues 381–421 (TVLGYMAEMRNEDVSEVAKDAGPSLLFITYAEAIANMPAST) lie on the Extracellular side of the membrane. A helical membrane pass occupies residues 422-443 (FFAIIFFLMLITLGLDSTFAGL). Positions 434, 437, and 438 each coordinate Na(+). Thr-439 provides a ligand contact to serotonin. Topologically, residues 444 to 463 (EGVITAVLDEFPHIWAKRRE) are cytoplasmic. The chain crosses the membrane as a helical span at residues 464–483 (WFVLAVVITCFFGSLVTLTF). Residues 484–494 (GGAYVVKLLEE) are Extracellular-facing. 2 residues coordinate serotonin: Glu-494 and Tyr-495. The chain crosses the membrane as a helical span at residues 495–516 (YATGPAVLTVALIEAVAVSWFY). The Cytoplasmic segment spans residues 517 to 538 (GITQFCRDVKEMLGFSPGWFWR). A helical membrane pass occupies residues 539-558 (ICWVAISPLFLLFIICSFLM). Serotonin is bound by residues Phe-556 and Ser-559. The Extracellular portion of the chain corresponds to 559 to 574 (SPPQLRLFQYNYPHWS). Residues 575–595 (IILGYCIGTSSFVCIPTYIAY) traverse the membrane as a helical segment. At 596 to 630 (RLISTPGTFKERIIKSITPETPTEIPCGDVRLNAV) the chain is on the cytoplasmic side. The interaction with RAB4A stretch occupies residues 616 to 624 (TPTEIPCGD).

Belongs to the sodium:neurotransmitter symporter (SNF) (TC 2.A.22) family. SLC6A4 subfamily. Monomer or homooligomer. Interacts (via C-terminus) with SCAMP2; the interaction is direct and retains transporter molecules intracellularly. Interacts with filamentous actin and STX1A. Interacts (via the N-terminus) with STX1A (via the H3 domain); this interaction regulates SLC4A6 channel conductance. Interacts with SEC23A, SEC24C and PATJ. Interacts with NOS1; the interaction may diminish the cell surface localization of SERT in the brain and, correspondingly, reduce serotonin reuptake. Interacts with TGFB1I1. Interacts with ITGAV:ITGB3. Interacts (via C-terminus) with ITGB3; this interaction regulates SLC6A4 trafficking. Post-translationally, phosphorylation at Thr-276 increases 5-HT uptake and is required for cGMP-mediated SERT regulation.

Its subcellular location is the cell membrane. The protein localises to the endomembrane system. It is found in the endosome membrane. The protein resides in the synapse. It localises to the cell junction. Its subcellular location is the focal adhesion. The protein localises to the cell projection. It is found in the neuron projection. It catalyses the reaction serotonin(out) + K(+)(in) + Na(+)(out) + H(+)(in) = serotonin(in) + K(+)(out) + Na(+)(in) + H(+)(out). Its function is as follows. Serotonin transporter that cotransports serotonin with one Na(+) ion in exchange for one K(+) ion and possibly one proton in an overall electroneutral transport cycle. Transports serotonin across the plasma membrane from the extracellular compartment to the cytosol thus limiting serotonin intercellular signaling. Essential for serotonin homeostasis in the central nervous system. In the developing somatosensory cortex, acts in glutamatergic neurons to control serotonin uptake and its trophic functions accounting for proper spatial organization of cortical neurons and elaboration of sensory circuits. In the mature cortex, acts primarily in brainstem raphe neurons to mediate serotonin uptake from the synaptic cleft back into the pre-synaptic terminal thus terminating serotonin signaling at the synapse. Modulates mucosal serotonin levels in the gastrointestinal tract through uptake and clearance of serotonin in enterocytes. Required for enteric neurogenesis and gastrointestinal reflexes. Regulates blood serotonin levels by ensuring rapid high affinity uptake of serotonin from plasma to platelets, where it is further stored in dense granules via vesicular monoamine transporters and then released upon stimulation. Mechanistically, the transport cycle starts with an outward-open conformation having Na1(+) and Cl(-) sites occupied. The binding of a second extracellular Na2(+) ion and serotonin substrate leads to structural changes to outward-occluded to inward-occluded to inward-open, where the Na2(+) ion and serotonin are released into the cytosol. Binding of intracellular K(+) ion induces conformational transitions to inward-occluded to outward-open and completes the cycle by releasing K(+) possibly together with a proton bound to Asp-98 into the extracellular compartment. Na1(+) and Cl(-) ions remain bound throughout the transport cycle. Additionally, displays serotonin-induced channel-like conductance for monovalent cations, mainly Na(+) ions. The channel activity is uncoupled from the transport cycle and may contribute to the membrane resting potential or excitability. The protein is Sodium-dependent serotonin transporter (SLC6A4) of Macaca mulatta (Rhesus macaque).